We begin with the raw amino-acid sequence, 173 residues long: MLCAKNKKDPKPPPASFSETSKVQNVQNTQPKPAAPSQMSIDESHSKNQKLPSAEKSVEECKKPVSPEKKKSPIKVLSEKKLKSKKKEEDKEPDEKVEKDVKKEVKADNNEPLVKNLKIAKKEQEEENPKTDLESHKDEAEAKKKESRRQKKMRNKNSKEGSVEKMEKSEKAY.

Residues 1–11 show a composition bias toward basic and acidic residues; sequence MLCAKNKKDPK. Positions 1 to 173 are disordered; that stretch reads MLCAKNKKDP…EKMEKSEKAY (173 aa). Polar residues predominate over residues 17 to 41; sequence FSETSKVQNVQNTQPKPAAPSQMSI. 2 stretches are compositionally biased toward basic and acidic residues: residues 56–109 and 120–144; these read KSVE…KADN and AKKE…EAKK. Residues 145-156 are compositionally biased toward basic residues; that stretch reads KESRRQKKMRNK. The span at 157-173 shows a compositional bias: basic and acidic residues; it reads NSKEGSVEKMEKSEKAY.

This is an uncharacterized protein from Caenorhabditis elegans.